The chain runs to 197 residues: Recombination protein RecR (197 aa).

The C4-type zinc finger occupies 57–72 (CSVCFGITEDDPCRFC). The region spanning 79–174 (GAICVVEEPQ…RVTRLAHGIP (96 aa)) is the Toprim domain.

This sequence belongs to the RecR family.

May play a role in DNA repair. It seems to be involved in an RecBC-independent recombinational process of DNA repair. It may act with RecF and RecO. The sequence is that of Recombination protein RecR from Geobacter sulfurreducens (strain ATCC 51573 / DSM 12127 / PCA).